The following is an 888-amino-acid chain: Pyruvate dehydrogenase E1 component (888 aa).

As to quaternary structure, homodimer. Part of the PDH complex, consisting of multiple copies of pyruvate dehydrogenase (E1), dihydrolipoamide acetyltransferase (E2) and lipoamide dehydrogenase (E3). Requires thiamine diphosphate as cofactor.

The catalysed reaction is N(6)-[(R)-lipoyl]-L-lysyl-[protein] + pyruvate + H(+) = N(6)-[(R)-S(8)-acetyldihydrolipoyl]-L-lysyl-[protein] + CO2. Its function is as follows. Component of the pyruvate dehydrogenase (PDH) complex, that catalyzes the overall conversion of pyruvate to acetyl-CoA and CO(2). The sequence is that of Pyruvate dehydrogenase E1 component (aceE) from Buchnera aphidicola subsp. Schizaphis graminum (strain Sg).